The primary structure comprises 170 residues: Phosphopantetheine adenylyltransferase (170 aa).

Threonine 9 contributes to the substrate binding site. ATP is bound by residues threonine 9–phenylalanine 10 and histidine 17. The substrate site is built by lysine 41, leucine 73, and arginine 87. Residues glycine 88 to arginine 90, glutamate 98, and tyrosine 123 to threonine 129 each bind ATP.

This sequence belongs to the bacterial CoaD family. As to quaternary structure, homohexamer. The cofactor is Mg(2+).

The protein resides in the cytoplasm. The catalysed reaction is (R)-4'-phosphopantetheine + ATP + H(+) = 3'-dephospho-CoA + diphosphate. The protein operates within cofactor biosynthesis; coenzyme A biosynthesis; CoA from (R)-pantothenate: step 4/5. Reversibly transfers an adenylyl group from ATP to 4'-phosphopantetheine, yielding dephospho-CoA (dPCoA) and pyrophosphate. The sequence is that of Phosphopantetheine adenylyltransferase from Bordetella petrii (strain ATCC BAA-461 / DSM 12804 / CCUG 43448).